The following is a 237-amino-acid chain: DNA repair protein RecO (237 aa).

The protein belongs to the RecO family.

Functionally, involved in DNA repair and RecF pathway recombination. The polypeptide is DNA repair protein RecO (Rickettsia africae (strain ESF-5)).